Reading from the N-terminus, the 185-residue chain is Disulfide bond formation protein B (185 aa).

Topologically, residues 1-25 (MLLFFVILGIFVLTILKAISKQRWS) are cytoplasmic. The chain crosses the membrane as a helical span at residues 26–42 (WLLLAASALSLELSALY). Residues 43-60 (FQHVMQLEPCVMCVYERL) are Periplasmic-facing. Cysteine 52 and cysteine 55 form a disulfide bridge. The helical transmembrane segment at 61-76 (AMLGILLAGLIGASSP) threads the bilayer. The Cytoplasmic segment spans residues 77-83 (NNVFIRL). A helical transmembrane segment spans residues 84–101 (SAFLLWGISAVWGILLAI). The Periplasmic portion of the chain corresponds to 102 to 156 (KHTDYQLHPSPFFTCDFFPNFPAWAPLHEWLPWLFNPTGDCSDIVWQFLGYSMPQ). The cysteines at positions 116 and 142 are disulfide-linked. Residues 157 to 175 (WLIVSFSLYTLLFIIFAIS) traverse the membrane as a helical segment. At 176 to 185 (AVLKTKKQLF) the chain is on the cytoplasmic side.

Belongs to the DsbB family.

The protein localises to the cell inner membrane. In terms of biological role, required for disulfide bond formation in some periplasmic proteins. Acts by oxidizing the DsbA protein. The polypeptide is Disulfide bond formation protein B (Psychromonas ingrahamii (strain DSM 17664 / CCUG 51855 / 37)).